The primary structure comprises 434 residues: UDP-N-acetylmuramoyl-L-alanyl-D-glutamate--2,6-diaminopimelate ligase (434 aa).

Ser17 serves as a coordination point for UDP-N-acetyl-alpha-D-muramoyl-L-alanyl-D-glutamate. 68–74 (GTNGKTT) serves as a coordination point for ATP. Residues 111-112 (TT), Ser138, Gln144, and Arg146 each bind UDP-N-acetyl-alpha-D-muramoyl-L-alanyl-D-glutamate. Lys178 is modified (N6-carboxylysine). Residues Arg326, 350 to 353 (DNPR), Gly401, and Glu405 contribute to the meso-2,6-diaminopimelate site. The Meso-diaminopimelate recognition motif motif lies at 350 to 353 (DNPR).

This sequence belongs to the MurCDEF family. MurE subfamily. Requires Mg(2+) as cofactor. In terms of processing, carboxylation is probably crucial for Mg(2+) binding and, consequently, for the gamma-phosphate positioning of ATP.

It localises to the cytoplasm. It carries out the reaction UDP-N-acetyl-alpha-D-muramoyl-L-alanyl-D-glutamate + meso-2,6-diaminopimelate + ATP = UDP-N-acetyl-alpha-D-muramoyl-L-alanyl-gamma-D-glutamyl-meso-2,6-diaminopimelate + ADP + phosphate + H(+). It functions in the pathway cell wall biogenesis; peptidoglycan biosynthesis. Catalyzes the addition of meso-diaminopimelic acid to the nucleotide precursor UDP-N-acetylmuramoyl-L-alanyl-D-glutamate (UMAG) in the biosynthesis of bacterial cell-wall peptidoglycan. The polypeptide is UDP-N-acetylmuramoyl-L-alanyl-D-glutamate--2,6-diaminopimelate ligase (Wolinella succinogenes (strain ATCC 29543 / DSM 1740 / CCUG 13145 / JCM 31913 / LMG 7466 / NCTC 11488 / FDC 602W) (Vibrio succinogenes)).